The sequence spans 159 residues: Small ribosomal subunit protein uS15 (159 aa).

Residues 1 to 16 are compositionally biased toward basic residues; it reads MNKRKEKGKSHSKRPV. A disordered region spans residues 1–22; it reads MNKRKEKGKSHSKRPVRNTPPR.

The protein belongs to the universal ribosomal protein uS15 family. As to quaternary structure, part of the 30S ribosomal subunit.

The polypeptide is Small ribosomal subunit protein uS15 (Ignicoccus hospitalis (strain KIN4/I / DSM 18386 / JCM 14125)).